We begin with the raw amino-acid sequence, 412 residues long: Phosphoribosylamine--glycine ligase (412 aa).

The ATP-grasp domain maps to Lys108 to Ala309. Leu134–Ser190 lines the ATP pocket. The Mg(2+) site is built by Glu279 and Asn281.

This sequence belongs to the GARS family. Mg(2+) serves as cofactor. It depends on Mn(2+) as a cofactor.

It carries out the reaction 5-phospho-beta-D-ribosylamine + glycine + ATP = N(1)-(5-phospho-beta-D-ribosyl)glycinamide + ADP + phosphate + H(+). It functions in the pathway purine metabolism; IMP biosynthesis via de novo pathway; N(1)-(5-phospho-D-ribosyl)glycinamide from 5-phospho-alpha-D-ribose 1-diphosphate: step 2/2. The protein is Phosphoribosylamine--glycine ligase of Lactococcus lactis subsp. lactis (strain IL1403) (Streptococcus lactis).